The following is a 131-amino-acid chain: Small ribosomal subunit protein uS8 (131 aa).

The protein belongs to the universal ribosomal protein uS8 family. As to quaternary structure, part of the 30S ribosomal subunit. Contacts proteins S5 and S12.

One of the primary rRNA binding proteins, it binds directly to 16S rRNA central domain where it helps coordinate assembly of the platform of the 30S subunit. In Burkholderia lata (strain ATCC 17760 / DSM 23089 / LMG 22485 / NCIMB 9086 / R18194 / 383), this protein is Small ribosomal subunit protein uS8.